A 138-amino-acid polypeptide reads, in one-letter code: Large ribosomal subunit protein uL16 (138 aa).

Basic residues predominate over residues 1 to 19 (MLIPRKVKHRKQHHPKKKG). A disordered region spans residues 1-24 (MLIPRKVKHRKQHHPKKKGTASGG).

Belongs to the universal ribosomal protein uL16 family. Part of the 50S ribosomal subunit.

Binds 23S rRNA and is also seen to make contacts with the A and possibly P site tRNAs. This is Large ribosomal subunit protein uL16 from Mycobacteroides abscessus (strain ATCC 19977 / DSM 44196 / CCUG 20993 / CIP 104536 / JCM 13569 / NCTC 13031 / TMC 1543 / L948) (Mycobacterium abscessus).